The sequence spans 154 residues: Interleukin-2 (154 aa).

An N-terminal signal peptide occupies residues methionine 1–serine 20. The O-linked (GalNAc...) threonine glycan is linked to threonine 23. Residues cysteine 78 and cysteine 126 are joined by a disulfide bond.

Belongs to the IL-2 family.

The protein resides in the secreted. In terms of biological role, cytokine produced by activated CD4-positive helper T-cells and to a lesser extend activated CD8-positive T-cells and natural killer (NK) cells that plays pivotal roles in the immune response and tolerance. Binds to a receptor complex composed of either the high-affinity trimeric IL-2R (IL2RA/CD25, IL2RB/CD122 and IL2RG/CD132) or the low-affinity dimeric IL-2R (IL2RB and IL2RG). Interaction with the receptor leads to oligomerization and conformation changes in the IL-2R subunits resulting in downstream signaling starting with phosphorylation of JAK1 and JAK3. In turn, JAK1 and JAK3 phosphorylate the receptor to form a docking site leading to the phosphorylation of several substrates including STAT5. This process leads to activation of several pathways including STAT, phosphoinositide-3-kinase/PI3K and mitogen-activated protein kinase/MAPK pathways. Functions as a T-cell growth factor and can increase NK-cell cytolytic activity as well. Promotes strong proliferation of activated B-cells and subsequently immunoglobulin production. Plays a pivotal role in regulating the adaptive immune system by controlling the survival and proliferation of regulatory T-cells, which are required for the maintenance of immune tolerance. Moreover, participates in the differentiation and homeostasis of effector T-cell subsets, including Th1, Th2, Th17 as well as memory CD8-positive T-cells. The protein is Interleukin-2 (IL2) of Lama glama (Llama).